A 665-amino-acid chain; its full sequence is MISRLIHSKHYLTLFRQNSSIAIPLLYSLELRCRSCGIKVQDKNKDEPGYYIKPVKLLNDSKTFSEQTQKLGLVVAADAPNILQNPIKKRPLDEAYDKLISKMSQSDKDLLINDFTLFGQPKYKDSKELETIPKNDKGETVKEVVNKIYTVKPDETSVECMRCRNIQYQSSYKMTDENFPISEMEQVLQNLPRASTAPLVYLFNANDFPMGINPNIFKFRNPKDIYFIMTKTDNLVADIKNKFNKSAILHEYTKNFVSDYLGIKYGVPKQNIFLSSSLKGWKLDELHRFIPDGSYIIGNTNCGKSTMIKSLMLNEELQNKKEQVRHVPFNTVSKIKDKFKQQFYQKVGPGVSYLPGFTRDIIPLNIGLKTVYDVPGFSSSPKIHYLYESIKEPKIIHRLIKGEKTFAKGYNGAQYKSFKGPQVLCFEGLGYLQLPKDCLFQIRNVTNFKIHAFSNIDKAAKLAQNIPPSLANDFAIGNHSLFSQFDKYLVPPFYGSIELVFENFGYIHIKPIGAKQSNELMKLYLYPGLQSIIRQPIINYITKTPTGFDKYGNALMKYDPVYKSEFALKRFRGGEEYQPLFSRLIPCVEDIEKFVGGGGGGAVAAAGAAAGAAETNIVDGNDAQGLAQSLRSQEYLQLNQFLKRRAKYDESYYMDASNKYDFWVE.

A mitochondrion-targeting transit peptide spans 1-17; the sequence is MISRLIHSKHYLTLFRQ. Residues 185-380 form the CP-type G domain; it reads EQVLQNLPRA…VYDVPGFSSS (196 aa).

Belongs to the TRAFAC class YlqF/YawG GTPase family. GEP3 subfamily.

It localises to the mitochondrion. In terms of biological role, may be involved in the mitochondrial lipid metabolism. The chain is Genetic interactor of prohibitins 3, mitochondrial (GEP3) from Lodderomyces elongisporus (strain ATCC 11503 / CBS 2605 / JCM 1781 / NBRC 1676 / NRRL YB-4239) (Yeast).